A 269-amino-acid chain; its full sequence is uncharacterized protein (269 aa).

Positions 1-22 (MSANGTDQQSDHGHSTSNNKDC) are disordered.

This is an uncharacterized protein from Gallus gallus (Chicken).